Reading from the N-terminus, the 285-residue chain is Integrin alpha-1 (285 aa).

Over 1 to 285 the chain is Extracellular; the sequence is ENMTFGTTLV…HYSQDWVMLG (285 aa). Asparagine 2, asparagine 40, asparagine 208, and asparagine 232 each carry an N-linked (GlcNAc...) asparagine glycan. The VWFA domain maps to 66 to 279; the sequence is IVLDGSNSIY…QAGFSAHYSQ (214 aa).

It belongs to the integrin alpha chain family. Heterodimer of an alpha and a beta subunit. Alpha-1 associates with beta-1.

Its subcellular location is the membrane. In terms of biological role, integrin alpha-1/beta-1 is a receptor for laminin and collagen. It recognizes the proline-hydroxylated sequence G-F-P-G-E-R in collagen. Involved in anchorage-dependent, negative regulation of EGF-stimulated cell growth. In Gallus gallus (Chicken), this protein is Integrin alpha-1 (ITGA1).